A 541-amino-acid chain; its full sequence is Chaperonin GroEL 2 (541 aa).

Residues 29 to 32, 86 to 90, glycine 413, 476 to 478, and aspartate 492 each bind ATP; these read TLGP, DGTTT, and NAA.

It belongs to the chaperonin (HSP60) family. In terms of assembly, forms a cylinder of 14 subunits composed of two heptameric rings stacked back-to-back. Interacts with the co-chaperonin GroES.

Its subcellular location is the cytoplasm. It catalyses the reaction ATP + H2O + a folded polypeptide = ADP + phosphate + an unfolded polypeptide.. Its function is as follows. Together with its co-chaperonin GroES, plays an essential role in assisting protein folding. The GroEL-GroES system forms a nano-cage that allows encapsulation of the non-native substrate proteins and provides a physical environment optimized to promote and accelerate protein folding. The chain is Chaperonin GroEL 2 from Streptomyces avermitilis (strain ATCC 31267 / DSM 46492 / JCM 5070 / NBRC 14893 / NCIMB 12804 / NRRL 8165 / MA-4680).